The following is a 284-amino-acid chain: 2-dehydro-3-deoxyphosphooctonate aldolase (284 aa).

Belongs to the KdsA family.

Its subcellular location is the cytoplasm. The catalysed reaction is D-arabinose 5-phosphate + phosphoenolpyruvate + H2O = 3-deoxy-alpha-D-manno-2-octulosonate-8-phosphate + phosphate. The protein operates within carbohydrate biosynthesis; 3-deoxy-D-manno-octulosonate biosynthesis; 3-deoxy-D-manno-octulosonate from D-ribulose 5-phosphate: step 2/3. It functions in the pathway bacterial outer membrane biogenesis; lipopolysaccharide biosynthesis. The sequence is that of 2-dehydro-3-deoxyphosphooctonate aldolase from Synechococcus sp. (strain ATCC 27144 / PCC 6301 / SAUG 1402/1) (Anacystis nidulans).